Here is a 245-residue protein sequence, read N- to C-terminus: Probable phosphatase Ent638_1550 (245 aa).

The Zn(2+) site is built by His7, His9, His15, His40, Glu73, His101, His131, Asp192, and His194.

Belongs to the PHP family. In terms of assembly, homotrimer. Zn(2+) serves as cofactor.

In Enterobacter sp. (strain 638), this protein is Probable phosphatase Ent638_1550.